We begin with the raw amino-acid sequence, 475 residues long: Ribulose bisphosphate carboxylase large chain (475 aa).

Residues 1–2 constitute a propeptide that is removed on maturation; that stretch reads MS. Residue Pro3 is modified to N-acetylproline. Lys14 carries the post-translational modification N6,N6,N6-trimethyllysine. Positions 123 and 173 each coordinate substrate. Residue Lys175 is the Proton acceptor of the active site. Position 177 (Lys177) interacts with substrate. 3 residues coordinate Mg(2+): Lys201, Asp203, and Glu204. Lys201 carries the N6-carboxylysine modification. The Proton acceptor role is filled by His294. Positions 295, 327, and 379 each coordinate substrate.

Belongs to the RuBisCO large chain family. Type I subfamily. As to quaternary structure, heterohexadecamer of 8 large chains and 8 small chains; disulfide-linked. The disulfide link is formed within the large subunit homodimers. The cofactor is Mg(2+). The disulfide bond which can form in the large chain dimeric partners within the hexadecamer appears to be associated with oxidative stress and protein turnover.

It is found in the plastid. The protein localises to the chloroplast. The enzyme catalyses 2 (2R)-3-phosphoglycerate + 2 H(+) = D-ribulose 1,5-bisphosphate + CO2 + H2O. It carries out the reaction D-ribulose 1,5-bisphosphate + O2 = 2-phosphoglycolate + (2R)-3-phosphoglycerate + 2 H(+). RuBisCO catalyzes two reactions: the carboxylation of D-ribulose 1,5-bisphosphate, the primary event in carbon dioxide fixation, as well as the oxidative fragmentation of the pentose substrate in the photorespiration process. Both reactions occur simultaneously and in competition at the same active site. The polypeptide is Ribulose bisphosphate carboxylase large chain (Tsuga heterophylla (Western hemlock)).